The primary structure comprises 390 residues: RNA-binding motif protein, X chromosome (390 aa).

Methionine 1 carries the N-acetylmethionine; in Heterogeneous nuclear ribonucleoprotein G; alternate modification. Valine 2 is subject to N-acetylvaline; in Heterogeneous nuclear ribonucleoprotein G, N-terminally processed. Residues 8 to 86 (GKLFIGGLNT…KAIKVEQATK (79 aa)) enclose the RRM domain. Lysine 22 participates in a covalent cross-link: Glycyl lysine isopeptide (Lys-Gly) (interchain with G-Cter in SUMO2). Position 30 is an N6-acetyllysine (lysine 30). The tract at residues 58–390 (SPADAKDAAR…RSDRGGRSRY (333 aa)) is disordered. A compositionally biased stretch (basic and acidic residues) spans 60–80 (ADAKDAARDMNGKSLDGKAIK). Residues lysine 80 and lysine 86 each participate in a glycyl lysine isopeptide (Lys-Gly) (interchain with G-Cter in SUMO2) cross-link. Residues serine 88 and serine 91 each carry the phosphoserine modification. Residues 109–120 (LRGGRGGSGGTR) are compositionally biased toward gly residues. Omega-N-methylarginine is present on residues arginine 125, arginine 144, and arginine 164. Positions 151 to 164 (RGPPPRSGGPPPKR) are enriched in pro residues. Serine 165 is modified (phosphoserine). Arginine 172 is modified (omega-N-methylarginine). At serine 174 the chain carries Phosphoserine. Composition is skewed to basic and acidic residues over residues 194–215 (PRREPLPSRRDVYLSPRDDGYS) and 241–274 (YTYRDYGHSSSRDDYPSRGYSDRDGYGRERDYSD). 4 positions are modified to phosphoserine: serine 261, serine 329, serine 330, and serine 332. Residues 323-337 (SRDSYTSSRSDLYSS) are compositionally biased toward low complexity. Over residues 338–347 (GRDRVGRQER) the composition is skewed to basic and acidic residues. Serine 352 is subject to Phosphoserine. The segment covering 362 to 371 (DSYSSSSRGA) has biased composition (low complexity). Basic and acidic residues predominate over residues 380 to 390 (SRSDRGGRSRY).

As to quaternary structure, homomultimer. Found in the supraspliceosome complex Identified in the spliceosome C complex. Interacts with KHDRBS3. Forms a complex with ILF2, ILF3, YLPM1, KHDRBS1, NCOA5 and PPP1CA. Interacts with SAFB/SAFB1. Interacts with ERAP1; the interaction is RNA-independent. Interacts with CLK2, KHDRBS2, SAFB, TRA2B and YTHDC1. Interacts with PPIA/CYPA. In terms of processing, O-glycosylated. Post-translationally, arg-182 is dimethylated, probably to asymmetric dimethylarginine. In terms of tissue distribution, expressed in brain, spleen, lung, liver, kidney, testis and heart. Weakly expressed in skeletal muscle (at protein level).

Its subcellular location is the nucleus. Functionally, RNA-binding protein that plays several role in the regulation of pre- and post-transcriptional processes. Implicated in tissue-specific regulation of gene transcription and alternative splicing of several pre-mRNAs. Binds to and stimulates transcription from the tumor suppressor TXNIP gene promoter; may thus be involved in tumor suppression. When associated with SAFB, binds to and stimulates transcription from the SREBF1 promoter. Associates with nascent mRNAs transcribed by RNA polymerase II. Component of the supraspliceosome complex that regulates pre-mRNA alternative splice site selection. Can either activate or suppress exon inclusion; acts additively with TRA2B to promote exon 7 inclusion of the survival motor neuron SMN. Represses the splicing of MAPT/Tau exon 10. Binds preferentially to single-stranded 5'-CC[A/C]-rich RNA sequence motifs localized in a single-stranded conformation; probably binds RNA as a homodimer. Binds non-specifically to pre-mRNAs. Also plays a role in the cytoplasmic TNFR1 trafficking pathways; promotes both the IL-1-beta-mediated inducible proteolytic cleavage of TNFR1 ectodomains and the release of TNFR1 exosome-like vesicles to the extracellular compartment. This chain is RNA-binding motif protein, X chromosome (Rbmx), found in Rattus norvegicus (Rat).